The sequence spans 153 residues: Cell division protein SepF (153 aa).

The protein belongs to the SepF family. In terms of assembly, homodimer. Interacts with FtsZ.

The protein localises to the cytoplasm. Its function is as follows. Cell division protein that is part of the divisome complex and is recruited early to the Z-ring. Probably stimulates Z-ring formation, perhaps through the cross-linking of FtsZ protofilaments. Its function overlaps with FtsA. The sequence is that of Cell division protein SepF from Clostridium novyi (strain NT).